Here is a 490-residue protein sequence, read N- to C-terminus: 3-octaprenyl-4-hydroxybenzoate carboxy-lyase (490 aa).

Asparagine 172 lines the Mn(2+) pocket. Residues 175–177 (IYR), 189–191 (RWL), and 194–195 (RG) each bind prenylated FMN. Mn(2+) is bound at residue glutamate 238. The active-site Proton donor is the aspartate 287.

The protein belongs to the UbiD family. In terms of assembly, homohexamer. Prenylated FMN is required as a cofactor. Mn(2+) serves as cofactor.

It is found in the cell membrane. It carries out the reaction a 4-hydroxy-3-(all-trans-polyprenyl)benzoate + H(+) = a 2-(all-trans-polyprenyl)phenol + CO2. Its pathway is cofactor biosynthesis; ubiquinone biosynthesis. Catalyzes the decarboxylation of 3-octaprenyl-4-hydroxy benzoate to 2-octaprenylphenol, an intermediate step in ubiquinone biosynthesis. This is 3-octaprenyl-4-hydroxybenzoate carboxy-lyase from Idiomarina loihiensis (strain ATCC BAA-735 / DSM 15497 / L2-TR).